The primary structure comprises 476 residues: Proline--tRNA ligase (476 aa).

This sequence belongs to the class-II aminoacyl-tRNA synthetase family. ProS type 3 subfamily. Homodimer.

It localises to the cytoplasm. The catalysed reaction is tRNA(Pro) + L-proline + ATP = L-prolyl-tRNA(Pro) + AMP + diphosphate. In terms of biological role, catalyzes the attachment of proline to tRNA(Pro) in a two-step reaction: proline is first activated by ATP to form Pro-AMP and then transferred to the acceptor end of tRNA(Pro). This chain is Proline--tRNA ligase, found in Mycoplasmopsis pulmonis (strain UAB CTIP) (Mycoplasma pulmonis).